The chain runs to 1255 residues: DNA-directed RNA polymerase subunit beta' (1255 aa).

Positions 60, 62, 77, and 80 each coordinate Zn(2+). Mg(2+) contacts are provided by aspartate 503, aspartate 505, and aspartate 507. Zn(2+) is bound by residues cysteine 875, cysteine 950, cysteine 957, and cysteine 960.

Belongs to the RNA polymerase beta' chain family. In terms of assembly, the RNAP catalytic core consists of 2 alpha, 1 beta, 1 beta' and 1 omega subunit. When a sigma factor is associated with the core the holoenzyme is formed, which can initiate transcription. It depends on Mg(2+) as a cofactor. Zn(2+) serves as cofactor.

It carries out the reaction RNA(n) + a ribonucleoside 5'-triphosphate = RNA(n+1) + diphosphate. In terms of biological role, DNA-dependent RNA polymerase catalyzes the transcription of DNA into RNA using the four ribonucleoside triphosphates as substrates. The chain is DNA-directed RNA polymerase subunit beta' from Mycoplasma mycoides subsp. mycoides SC (strain CCUG 32753 / NCTC 10114 / PG1).